Consider the following 106-residue polypeptide: Cell division protein FtsB (106 aa).

Residues 1-3 (MGK) lie on the Cytoplasmic side of the membrane. A helical transmembrane segment spans residues 4 to 21 (LTLLLLVLLGWLQYSLWL). Topologically, residues 22–106 (GKNGIHDFVR…GTPSTQNNAQ (85 aa)) are periplasmic. Positions 31–62 (RVKEDVAAQEANNSTLKARNDQLFAEIDDLNG) form a coiled coil.

It belongs to the FtsB family. In terms of assembly, part of a complex composed of FtsB, FtsL and FtsQ.

It localises to the cell inner membrane. Essential cell division protein. May link together the upstream cell division proteins, which are predominantly cytoplasmic, with the downstream cell division proteins, which are predominantly periplasmic. The chain is Cell division protein FtsB from Yersinia pseudotuberculosis serotype O:1b (strain IP 31758).